A 291-amino-acid polypeptide reads, in one-letter code: ATP synthase gamma chain (291 aa).

It belongs to the ATPase gamma chain family. F-type ATPases have 2 components, CF(1) - the catalytic core - and CF(0) - the membrane proton channel. CF(1) has five subunits: alpha(3), beta(3), gamma(1), delta(1), epsilon(1). CF(0) has three main subunits: a, b and c.

The protein localises to the cell inner membrane. Produces ATP from ADP in the presence of a proton gradient across the membrane. The gamma chain is believed to be important in regulating ATPase activity and the flow of protons through the CF(0) complex. The chain is ATP synthase gamma chain from Burkholderia pseudomallei (strain 1106a).